We begin with the raw amino-acid sequence, 1193 residues long: MAAPYRQPEEAVDDSEFIDDHHDHLRDTVHHRLRANSAIMQFQKILVANRGEIPIRIFRTAHELSLQTVAIFSHEDRLSMHRQKADEAYMIGHRGQYTPVGAYLAADEIVKIALEHGVHLIHPGYGFLSENADFARKVEKAGMVFVGPTPDTIDSLGDKVSARQLAIRCNVPVVPGTEGPVERYEEVKAFTDTYGFPIIIKAAFGGGGRGMRVVRNQADLRDSFERATSEARSAFGNGTVFVERFLDKPKHIEVQLLGDNHGNVVHLFERDCSVQRRHQKVVEVAPAKDLPTDVRDRILSDAVKLAKSVNYRNAGTAEFLVDQQNRHYFIEINPRIQVEHTITEEITGIDIVAAQIQIAAGATLEQLGLTQDRISTRGFAIQCRITTEDPSKGFSPDTGKIEVYRSAGGNGVRLDGGNGFAGAIITPHYDSMLVKCTCRGSTYEIARRKVVRALVEFRIRGVKTNIPFLTSLLSHPTFVDGNCWTTFIDDTTELFALVGSQNRAQKLLAYLGDVAVNGSSIKGQMGEPKFKGEIIKPKLLDAQGKPLDVSHPCTKGWKQIIDQEGPVAFAKAVRANKGCLIMDTTWRDAHQSLLATRVRTIDLLNIAHETSHALSNAYSLECWGGATFDVAMRFLYEDPWDRLRKMRKAVPNIPFQMLLRGANGVAYSSLPDNAIYHFCKNAKKCGVDIFRVFDALNDVDQLEVGIKAVHAAEGVVEATVCYSGDMLNPKKKYNLEYYLALVDKIVALKPHVLGIKDMAGVLKPQAARLLVGSIRERYPDLPIHVHTHDSAGTGVASMIACAQAGADAVDAATDSMSGMTSQPSIGAILASLEGTEHDPGLNSAHVRALDSYWAQLRLLYSPFEANLTGPDPEVYEHEIPGGQLTNLIFQASQLGLGQQWAETKKAYEVANDLLGDIVKVTPTSKVVGDLAQFIVSNKLSAQDVIDRAAELDFPGSVLEFLEGLMGQPFGGFPEPLRSRALRNRRKLDKRPGLYLEPLDLAAIKNQIREQFGSATEYDVASYAMYPKVFEDYKKFVQKYGDLSVLPTRYFLAKPEIGEEFHVELEKGKMLILKLLAIGPLSEQTGQREVFYEVNGEVRQVSIDDKKASIDNTARPKADVGDSSQVGAPMSGVVVEIRVHDGLEVKKGDPLAVLSAMKMEMVISAPHSGKVSGLLVKEGDSVDGQDLVCKITKA.

In terms of domain architecture, Biotin carboxylation spans 41–493 (QFQKILVANR…WTTFIDDTTE (453 aa)). Residues Lys-159, Glu-243, and His-278 each contribute to the ATP site. The ATP-grasp domain occupies 163 to 360 (RQLAIRCNVP…IVAAQIQIAA (198 aa)). Arg-335 is an active-site residue. The 269-residue stretch at 579–847 (CLIMDTTWRD…DPGLNSAHVR (269 aa)) folds into the Pyruvate carboxyltransferase domain. Residues 587–591 (RDAHQ) and Arg-660 contribute to the substrate site. Asp-588 provides a ligand contact to a divalent metal cation. The a divalent metal cation site is built by Lys-756, His-786, and His-788. Lys-756 carries the post-translational modification N6-carboxylysine. Residue Thr-921 participates in substrate binding. Residues 1116–1191 (KADVGDSSQV…DGQDLVCKIT (76 aa)) form the Biotinyl-binding domain. Lys-1157 carries the N6-biotinyllysine modification.

The cofactor is biotin. It depends on Zn(2+) as a cofactor.

The protein resides in the cytoplasm. It carries out the reaction hydrogencarbonate + pyruvate + ATP = oxaloacetate + ADP + phosphate + H(+). It functions in the pathway carbohydrate biosynthesis; gluconeogenesis. Its function is as follows. Pyruvate carboxylase catalyzes a 2-step reaction, involving the ATP-dependent carboxylation of the covalently attached biotin in the first step and the transfer of the carboxyl group to pyruvate in the second. This Aspergillus terreus (strain NIH 2624 / FGSC A1156) protein is Pyruvate carboxylase (pyc).